The primary structure comprises 114 residues: Lectin MVL (114 aa).

The stretch at 2-55 (ASYKVNIPAGPLWSNAEAQQVGPKIAAAHQGNFTGQWTTVVESAMSVVEVELQV) is repeat 1. A carbohydrate is bound by residues 12-16 (PLWSN), Gln20, and 36-44 (GQWTTVVES). The segment at 56–60 (ENTGI) is linker. Residues 61–114 (HEFKTDVLAGPLWSNDEAQKLGPQIAASYGAEFTGQWRTIVEGVMSVIQIKYTF) form repeat 2. A carbohydrate is bound by residues 71 to 75 (PLWSN), Gln79, and 95 to 103 (GQWRTIVEG).

As to quaternary structure, homodimer.

The protein localises to the cytoplasm. Functionally, carbohydrate-binding protein that binds oligomannosides such as Man(6)GlcNAc(2) with sub-micromolar affinities. The specificity of MVL is unique in that its minimal target comprises the Man-alpha-(1-&gt;6)-Man-beta-(1-&gt;4)-GlcNAc-beta-(1-&gt;4)-GlcNAc tetrasaccharide core (Man(2)A) found in N-linked oligomannosides. Displays hemagglutininating activity on rabbit, horse and hen erythrocytes. This activity is inhibited by yeast mannan. Does not bind mono- and disaccharides. Inhibits HIV-1 envelope-mediated cell fusion at nanomolar concentrations through carbohydrate-mediated interactions with high-mannose residues on the surface of the HIV envelope glycoprotein gp120. Its function is as follows. Unexpectedly for a lectin, one of the 2 oligomannose binding sites of MVL can catalyze the cleavage of chitin fragments (such as chitotriose, i.e. GlcNAc(3) or GlcNAc-beta-(1-&gt;4)-GlcNAcbeta-(1-&gt;4)-GlcNAc, and chitotetraose, i.e. GlcNAc(4)) to GlcNAc. This weak beta-1,4-glycosidase activity is restricted to the C-terminal carbohydrate-binding site. Does not cleave Man(3)GlcNAc(2) or the tetrasaccharide Man(2)A. The sequence is that of Lectin MVL (mvl) from Microcystis viridis (Polycystis viridis).